We begin with the raw amino-acid sequence, 677 residues long: Protein asunder (677 aa).

Residues 515–540 (RLKLSKAKDQYRLLYRELEQLIQLNS) are a coiled coil. Low complexity predominate over residues 578–598 (ESPLSPERLEPTSSSSSNSLL). Residues 578 to 604 (ESPLSPERLEPTSSSSSNSLLKARKRR) form a disordered region. The Nuclear localization signal (NLS) signature appears at 598 to 604 (LKARKRR).

It belongs to the Integrator subunit 13 family. In terms of assembly, belongs to the multiprotein complex Integrator, at least composed of IntS1, IntS2, IntS3, IntS4, omd/IntS5, IntS6, defl/IntS7, IntS8, IntS9, IntS10, IntS11, IntS12, asun/IntS13, IntS14 and IntS15. The core complex associates with protein phosphatase 2A subunits mts/PP2A and Pp2A-29B, to form the Integrator-PP2A (INTAC) complex. Post-translationally, phosphorylated.

Its subcellular location is the nucleus. It is found in the cytoplasm. It localises to the perinuclear region. Functionally, component of the integrator complex, a multiprotein complex that terminates RNA polymerase II (Pol II) transcription in the promoter-proximal region of genes. The integrator complex provides a quality checkpoint during transcription elongation by driving premature transcription termination of transcripts that are unfavorably configured for transcriptional elongation: the complex terminates transcription by (1) catalyzing dephosphorylation of the C-terminal domain (CTD) of Pol II subunit Polr2A/Rbp1 and Spt5, and (2) degrading the exiting nascent RNA transcript via endonuclease activity. The integrator complex is also involved in the 3'-end processing of the U7 snRNA, and also the spliceosomal snRNAs U1, U2, U4 and U5. The sequence is that of Protein asunder (asun) from Drosophila willistoni (Fruit fly).